We begin with the raw amino-acid sequence, 163 residues long: Ribosome maturation factor RimP (163 aa).

It belongs to the RimP family.

The protein localises to the cytoplasm. Functionally, required for maturation of 30S ribosomal subunits. The protein is Ribosome maturation factor RimP of Polynucleobacter necessarius subsp. necessarius (strain STIR1).